Reading from the N-terminus, the 872-residue chain is Probable GPI-anchored adhesin-like protein PGA25 (872 aa).

An N-terminal signal peptide occupies residues 1 to 19 (MKVTAVSSVLLTVAALTNA). Low complexity predominate over residues 43–65 (PAAAPAAQPAAQPTTQSPADQPT). Disordered regions lie at residues 43–383 (PAAA…TIIP), 492–517 (KPTG…DETD), and 623–809 (PDDW…ECDT). Residues 66–83 (VQSPVSSDQPSTAQPVAQ) are compositionally biased toward polar residues. 2 stretches are compositionally biased toward low complexity: residues 84 to 110 (NNLL…TRST) and 125 to 171 (SSEA…SSSS). Residue Asn92 is glycosylated (N-linked (GlcNAc...) asparagine). The span at 196–207 (ETDDEDCVEETE) shows a compositional bias: acidic residues. Composition is skewed to low complexity over residues 208-225 (SPTS…VATT), 242-260 (SSAP…SSTT), and 274-293 (SSVP…NTTT). Asn290 carries an N-linked (GlcNAc...) asparagine glycan. Residues 317–328 (AEEDDEECEDPT) show a composition bias toward acidic residues. Low complexity predominate over residues 349 to 363 (TSQSKTSVSSVVSKS). Positions 366–376 (EDDDDETECET) are enriched in acidic residues. Residues 495–506 (GSGSITVLPTKS) are compositionally biased toward polar residues. 2 stretches are compositionally biased toward acidic residues: residues 624–635 (DDWEDDGYEGED) and 646–659 (DDGE…DDGE). Composition is skewed to gly residues over residues 666–692 (SSSG…GSGS), 701–710 (SSGGTWGGSG), and 731–740 (SWWGGSGSGS). The span at 741 to 760 (SSGSSSGVSSGDSGSSSVTG) shows a compositional bias: low complexity. Gly residues predominate over residues 761-771 (GSSGSWWGGSG). Over residues 780-808 (DGYDDEDDQTPEPECDDEDDSWDDDEECD) the composition is skewed to acidic residues. Ala845 carries GPI-anchor amidated alanine lipidation. Residues 846 to 872 (QSVTQIENIGGKVSASGLFVVLGLLLI) constitute a propeptide, removed in mature form.

It belongs to the HYR1/IFF family. In terms of processing, the GPI-anchor is attached to the protein in the endoplasmic reticulum and serves to target the protein to the cell surface. There, the glucosamine-inositol phospholipid moiety is cleaved off and the GPI-modified mannoprotein is covalently attached via its lipidless GPI glycan remnant to the 1,6-beta-glucan of the outer cell wall layer.

The protein resides in the secreted. Its subcellular location is the cell wall. The protein localises to the membrane. In terms of biological role, probable GPI-anchored cell wall protein involved in cell wall organization, hyphal growth, as well as in host-fungal interaction and virulence. In Candida albicans (strain SC5314 / ATCC MYA-2876) (Yeast), this protein is Probable GPI-anchored adhesin-like protein PGA25 (PGA25).